The chain runs to 373 residues: MTIPELPKDLIEEILCYVPATYLKRLRSTCKGWNRLFKDDRRFAKKHYDKAAKQFLPLMSTNEELCAMSVNLHGTIPSLEVKDKPWLFVSDSKHCDIEISRIFHSGGLLLCFSRDGEISIIVWNPLTSETRLIRTRNRRDKGRNFVLGYYQEDKKTYYKILSFYLDSKDFEIFEFNSDSWRFIDDICPGLSLLYSDQCVSLKGNTYMFAIDDLSVSLLKYDFSTETSVPVPLPYKSRSFEAISLSVVREEKLSVLLQRDKSSKTEIWVTNVIDETTTKVMVVSWSKVLSLDLSPDLKIRYGESFLLDEEKKVIMIFNNRMEEENKSEDKLYIIGDDDNKATQVYTIHGYGPAVFNYFPSLVQIEQSSRQEEKS.

The F-box domain occupies 1 to 46; that stretch reads MTIPELPKDLIEEILCYVPATYLKRLRSTCKGWNRLFKDDRRFAKK. Kelch repeat units follow at residues 101 to 148, 149 to 200, and 329 to 373; these read RIFH…FVLG, YYQE…QCVS, and KLYI…EEKS.

In Arabidopsis thaliana (Mouse-ear cress), this protein is Putative F-box/kelch-repeat protein At3g19410.